We begin with the raw amino-acid sequence, 256 residues long: Ubiquinone/menaquinone biosynthesis C-methyltransferase UbiE (256 aa).

The segment covering 1 to 12 (MNDQRKGDHAEP) has biased composition (basic and acidic residues). Positions 1–23 (MNDQRKGDHAEPTTHFGYQDVPE) are disordered. Residues Thr-79, Asp-100, and 128-129 (DA) each bind S-adenosyl-L-methionine.

Belongs to the class I-like SAM-binding methyltransferase superfamily. MenG/UbiE family.

The catalysed reaction is a 2-demethylmenaquinol + S-adenosyl-L-methionine = a menaquinol + S-adenosyl-L-homocysteine + H(+). It catalyses the reaction a 2-methoxy-6-(all-trans-polyprenyl)benzene-1,4-diol + S-adenosyl-L-methionine = a 5-methoxy-2-methyl-3-(all-trans-polyprenyl)benzene-1,4-diol + S-adenosyl-L-homocysteine + H(+). Its pathway is quinol/quinone metabolism; menaquinone biosynthesis; menaquinol from 1,4-dihydroxy-2-naphthoate: step 2/2. It functions in the pathway cofactor biosynthesis; ubiquinone biosynthesis. In terms of biological role, methyltransferase required for the conversion of demethylmenaquinol (DMKH2) to menaquinol (MKH2) and the conversion of 2-polyprenyl-6-methoxy-1,4-benzoquinol (DDMQH2) to 2-polyprenyl-3-methyl-6-methoxy-1,4-benzoquinol (DMQH2). The sequence is that of Ubiquinone/menaquinone biosynthesis C-methyltransferase UbiE from Pseudomonas putida (strain ATCC 700007 / DSM 6899 / JCM 31910 / BCRC 17059 / LMG 24140 / F1).